The following is a 427-amino-acid chain: UPF0597 protein CPR_0790 (427 aa).

Belongs to the UPF0597 family.

This is UPF0597 protein CPR_0790 from Clostridium perfringens (strain SM101 / Type A).